A 337-amino-acid chain; its full sequence is S-adenosylmethionine:tRNA ribosyltransferase-isomerase (337 aa).

This sequence belongs to the QueA family. In terms of assembly, monomer.

The protein localises to the cytoplasm. The catalysed reaction is 7-aminomethyl-7-carbaguanosine(34) in tRNA + S-adenosyl-L-methionine = epoxyqueuosine(34) in tRNA + adenine + L-methionine + 2 H(+). Its pathway is tRNA modification; tRNA-queuosine biosynthesis. Transfers and isomerizes the ribose moiety from AdoMet to the 7-aminomethyl group of 7-deazaguanine (preQ1-tRNA) to give epoxyqueuosine (oQ-tRNA). The protein is S-adenosylmethionine:tRNA ribosyltransferase-isomerase of Legionella pneumophila (strain Corby).